The sequence spans 82 residues: Conotoxin Cal30 (82 aa).

Positions 1–19 (MEKLIILLLVASLLVTTDS) are cleaved as a signal peptide.

Post-translationally, may contain 5 disulfide bonds. Expressed by the venom duct.

It localises to the secreted. Its function is as follows. Probable neurotoxin. This is Conotoxin Cal30 from Californiconus californicus (California cone).